The primary structure comprises 391 residues: Choline/ethanolaminephosphotransferase 1 (391 aa).

Residues 1–49 are Lumenal-facing; it reads MGYFVPDSHIENLKSYKYQSEDRSLVSKYFLKPFWQRFCHIFPTWMAPN. Residues 50 to 69 traverse the membrane as a helical segment; that stretch reads IITLSGFAFIVINVLTVFYY. Over 70-172 the chain is Cytoplasmic; the sequence is DPNLNTDTPR…YHTHTLYLSE (103 aa). Residues 173 to 193 traverse the membrane as a helical segment; the sequence is FSGPVEGILIVCVSLILTGIY. Residues 194-211 lie on the Lumenal side of the membrane; that stretch reads GKQVIWHTYLFTITVGDK. Residues 212 to 232 form a helical membrane-spanning segment; it reads VIDVDTLDIVFSLAVFGLVMN. Residues 233–264 lie on the Cytoplasmic side of the membrane; that stretch reads ALSAKRNVDKYYRNSTSSANNITQIEQDSAIK. The helical transmembrane segment at 265–282 threads the bilayer; that stretch reads GLLPFFAYYASIALLVWM. Residues 283–285 are Lumenal-facing; sequence QPS. The chain crosses the membrane as a helical span at residues 286–308; it reads FITLSFILSVGFTGAFTVGRIIV. Topologically, residues 309–321 are cytoplasmic; sequence CHLTKQSFPMFNA. A helical membrane pass occupies residues 322–342; it reads PMLIPLCQIVLYKICLSLWGI. Over 343–346 the chain is Lumenal; the sequence is ESNK. Residues 347–367 form a helical membrane-spanning segment; that stretch reads IVFALSWLGFGLSLGVHIMFM. At 368–391 the chain is on the cytoplasmic side; sequence NDIIHEFTEYLDVYALSIKRSKLT.

Belongs to the CDP-alcohol phosphatidyltransferase class-I family. Mg(2+) is required as a cofactor.

The protein localises to the golgi apparatus membrane. It catalyses the reaction CDP-ethanolamine + a 1,2-diacyl-sn-glycerol = a 1,2-diacyl-sn-glycero-3-phosphoethanolamine + CMP + H(+). The enzyme catalyses CDP-choline + a 1,2-diacyl-sn-glycerol = a 1,2-diacyl-sn-glycero-3-phosphocholine + CMP + H(+). The catalysed reaction is CDP-N-methylethanolamine + a 1,2-diacyl-sn-glycerol = a 1,2-diacyl-sn-glycero-3-phospho-N-methylethanolamine + CMP + H(+). It carries out the reaction CDP-N,N-dimethylethanolamine + a 1,2-diacyl-sn-glycerol = a 1,2-diacyl-sn-glycero-3-phospho-N,N-dimethylethanolamine + CMP + H(+). It catalyses the reaction 1,2-di-(9Z-octadecenoyl)-glycerol + CDP-choline = 1,2-di-(9Z-octadecenoyl)-sn-glycero-3-phosphocholine + CMP + H(+). The enzyme catalyses 1,2-di-(9Z-octadecenoyl)-glycerol + CDP-ethanolamine = 1,2-di-(9Z-octadecenoyl)-sn-glycero-3-phosphoethanolamine + CMP + H(+). Its pathway is phospholipid metabolism; phosphatidylethanolamine biosynthesis; phosphatidylethanolamine from ethanolamine: step 3/3. It functions in the pathway phospholipid metabolism; phosphatidylcholine biosynthesis; phosphatidylcholine from phosphocholine: step 2/2. Its activity is regulated as follows. Requires a divalent cation activator, and is inhibited by CMP. Activated by phospholipids, especially phosphatidylcholine. In terms of biological role, catalyzes the final step in the CDP-ethanolamine route leading to phosphatidylethanolamine (PE). Can also catalyze the formation of phosphatidylcholine (PC) from CDP-choline, but does not substantially contribute to PC biosynthesis. Preferentially uses CDP-dimethylethanolamine and CDP-propanolamine as aminoalcohol substrates. Shows highest activity toward di-unsaturated diacylglycerol species as lipid substrates. The CDP-ethanolamine pathway may play a role in maintaining the proper PE species distribution. In Saccharomyces cerevisiae (strain ATCC 204508 / S288c) (Baker's yeast), this protein is Choline/ethanolaminephosphotransferase 1 (EPT1).